We begin with the raw amino-acid sequence, 154 residues long: Small ribosomal subunit protein uS15 (154 aa).

A compositionally biased stretch (basic residues) spans 1–14; the sequence is MAPVPHRSRHKKGR. The tract at residues 1-24 is disordered; sequence MAPVPHRSRHKKGRSGSVRPAHPT.

It belongs to the universal ribosomal protein uS15 family. Part of the 30S ribosomal subunit.

This is Small ribosomal subunit protein uS15 from Pyrobaculum arsenaticum (strain DSM 13514 / JCM 11321 / PZ6).